A 140-amino-acid chain; its full sequence is Putative pre-16S rRNA nuclease (140 aa).

Belongs to the YqgF nuclease family.

It is found in the cytoplasm. Could be a nuclease involved in processing of the 5'-end of pre-16S rRNA. This is Putative pre-16S rRNA nuclease from Serratia proteamaculans (strain 568).